The chain runs to 325 residues: uncharacterized protein (325 aa).

Belongs to the mgp1/MG371 family.

This is an uncharacterized protein from Mycoplasma pneumoniae (strain ATCC 29342 / M129 / Subtype 1) (Mycoplasmoides pneumoniae).